Here is a 273-residue protein sequence, read N- to C-terminus: XIAP-associated factor 1 (273 aa).

Residues Leu22–Asp80 form a TRAF-type zinc finger. The interval Gly181–Pro228 is disordered.

As to quaternary structure, interacts with BIRC1, BIRC2, BIRC3, BIRC4, BIRC7 and BIRC8. Part of an complex consisting of BIRC4, XAF1 and BIRC5; the complex formation requires IFN-beta stimulation. Interacts with RNF114, the interaction increases XAF1 stability and proapoptotic effects, and may regulate IFN signaling.

It localises to the cytoplasm. The protein resides in the nucleus. It is found in the mitochondrion. Its function is as follows. Seems to function as a negative regulator of members of the IAP (inhibitor of apoptosis protein) family. Inhibits anti-caspase activity of BIRC4. Induces cleavage and inactivation of BIRC4 independent of caspase activation. Mediates TNF-alpha-induced apoptosis and is involved in apoptosis in trophoblast cells. May inhibit BIRC4 indirectly by activating the mitochondrial apoptosis pathway. After translocation to mitochondria, promotes translocation of BAX to mitochondria and cytochrome c release from mitochondria. Seems to promote the redistribution of BIRC4 from the cytoplasm to the nucleus, probably independent of BIRC4 inactivation which seems to occur in the cytoplasm. The BIRC4-XAF1 complex mediates down-regulation of BIRC5/survivin; the process requires the E3 ligase activity of BIRC4. Seems to be involved in cellular sensitivity to the proapoptotic actions of TRAIL. May be a tumor suppressor by mediating apoptosis resistance of cancer cells. In Mus musculus (Mouse), this protein is XIAP-associated factor 1 (Xaf1).